Reading from the N-terminus, the 273-residue chain is Zinc finger protein 32 (273 aa).

C2H2-type zinc fingers lie at residues 77–99 (YECQ…ERIH), 105–127 (FECT…QRIH), and 133–155 (YQCK…ERLH). Zn(2+) contacts are provided by Cys-79, Cys-82, His-95, His-99, Cys-107, Cys-110, His-123, His-127, Ser-141, Gln-144, Gly-157, Tyr-161, Phe-198, Lys-201, Leu-214, Ala-218, Cys-247, Cys-250, His-263, and Cys-267. 2 consecutive C2H2-type zinc fingers follow at residues 161–183 (YECA…RRVH) and 189–211 (YRCD…IRVH). Residues 217–239 (YACTQCRKSFHTRGNCILHGKIH) form a C2H2-type 6 zinc finger. The CCHC-type zinc finger occupies 245–267 (YLCGQCGKSFTQRGSLAVHQRSC).

Belongs to the krueppel C2H2-type zinc-finger protein family.

The protein localises to the nucleus. Functionally, may be involved in transcriptional regulation. The sequence is that of Zinc finger protein 32 (ZNF32) from Homo sapiens (Human).